The primary structure comprises 602 residues: Chaperone protein DnaK (602 aa).

A Phosphothreonine; by autocatalysis modification is found at Thr-199.

This sequence belongs to the heat shock protein 70 family.

In terms of biological role, acts as a chaperone. The protein is Chaperone protein DnaK of Carsonella ruddii (strain PV).